Consider the following 96-residue polypeptide: Large ribosomal subunit protein uL23 (96 aa).

This sequence belongs to the universal ribosomal protein uL23 family. As to quaternary structure, part of the 50S ribosomal subunit. Contacts protein L29, and trigger factor when it is bound to the ribosome.

Functionally, one of the early assembly proteins it binds 23S rRNA. One of the proteins that surrounds the polypeptide exit tunnel on the outside of the ribosome. Forms the main docking site for trigger factor binding to the ribosome. The chain is Large ribosomal subunit protein uL23 from Caldanaerobacter subterraneus subsp. tengcongensis (strain DSM 15242 / JCM 11007 / NBRC 100824 / MB4) (Thermoanaerobacter tengcongensis).